A 61-amino-acid chain; its full sequence is Protein translocase subunit SecE (61 aa).

Residues 38-58 (GIGMILIGLIGLVIRMIGYLI) form a helical membrane-spanning segment.

This sequence belongs to the SecE/SEC61-gamma family. As to quaternary structure, component of the Sec protein translocase complex. Heterotrimer consisting of SecY (alpha), SecG (beta) and SecE (gamma) subunits. The heterotrimers can form oligomers, although 1 heterotrimer is thought to be able to translocate proteins. Interacts with the ribosome. May interact with SecDF, and other proteins may be involved.

It localises to the cell membrane. Functionally, essential subunit of the Sec protein translocation channel SecYEG. Clamps together the 2 halves of SecY. May contact the channel plug during translocation. This chain is Protein translocase subunit SecE, found in Thermococcus onnurineus (strain NA1).